An 873-amino-acid chain; its full sequence is Leucine--tRNA ligase (873 aa).

Residues 47-57 (PYPSGKLHMGH) carry the 'HIGH' region motif. The short motif at 636-640 (KMSKS) is the 'KMSKS' region element. Residue Lys639 coordinates ATP.

It belongs to the class-I aminoacyl-tRNA synthetase family.

Its subcellular location is the cytoplasm. It carries out the reaction tRNA(Leu) + L-leucine + ATP = L-leucyl-tRNA(Leu) + AMP + diphosphate. The chain is Leucine--tRNA ligase from Acinetobacter baylyi (strain ATCC 33305 / BD413 / ADP1).